A 361-amino-acid chain; its full sequence is Phosphoserine aminotransferase (361 aa).

L-glutamate is bound at residue Arg-43. Residues Trp-103, Thr-153, Asp-173, and Gln-196 each coordinate pyridoxal 5'-phosphate. Residue Lys-197 is modified to N6-(pyridoxal phosphate)lysine. Residue 238-239 participates in pyridoxal 5'-phosphate binding; the sequence is NT.

It belongs to the class-V pyridoxal-phosphate-dependent aminotransferase family. SerC subfamily. Homodimer. Pyridoxal 5'-phosphate serves as cofactor.

The protein resides in the cytoplasm. It carries out the reaction O-phospho-L-serine + 2-oxoglutarate = 3-phosphooxypyruvate + L-glutamate. It catalyses the reaction 4-(phosphooxy)-L-threonine + 2-oxoglutarate = (R)-3-hydroxy-2-oxo-4-phosphooxybutanoate + L-glutamate. Its pathway is amino-acid biosynthesis; L-serine biosynthesis; L-serine from 3-phospho-D-glycerate: step 2/3. The protein operates within cofactor biosynthesis; pyridoxine 5'-phosphate biosynthesis; pyridoxine 5'-phosphate from D-erythrose 4-phosphate: step 3/5. In terms of biological role, catalyzes the reversible conversion of 3-phosphohydroxypyruvate to phosphoserine and of 3-hydroxy-2-oxo-4-phosphonooxybutanoate to phosphohydroxythreonine. This chain is Phosphoserine aminotransferase, found in Hahella chejuensis (strain KCTC 2396).